The following is an 813-amino-acid chain: Disintegrin and metalloproteinase domain-containing protein 33 (813 aa).

An N-terminal signal peptide occupies residues 1–29 (MGWRPRRARGTPLLLLLLLLLLWPVPGAG). The propeptide occupies 30–203 (VLQGHIPGQP…PGGPQSRGRR (174 aa)). The Extracellular portion of the chain corresponds to 30–701 (VLQGHIPGQP…GPVQAENHDT (672 aa)). The N-linked (GlcNAc...) asparagine glycan is linked to Asn-109. Positions 131–138 (CTCSGMSG) match the Cysteine switch motif. Cys-133 contacts Zn(2+). Asn-145 carries N-linked (GlcNAc...) asparagine glycosylation. Positions 184 to 205 (PGNKAGMTSLPGGPQSRGRREA) are disordered. The 200-residue stretch at 210-409 (KYLELYIVAD…GGGACLSNAP (200 aa)) folds into the Peptidase M12B domain. Residues Asn-231 and Asn-276 are each glycosylated (N-linked (GlcNAc...) asparagine). 3 disulfides stabilise this stretch: Cys-320/Cys-404, Cys-360/Cys-388, and Cys-361/Cys-371. Position 345 (His-345) interacts with Zn(2+). Glu-346 is a catalytic residue. The Zn(2+) site is built by His-349 and His-355. Residues 417–503 (PALCGNGFVE…HCPPDVYLLD (87 aa)) enclose the Disintegrin domain. N-linked (GlcNAc...) asparagine glycosylation occurs at Asn-448. Disulfide bonds link Cys-475/Cys-495, Cys-653/Cys-663, Cys-657/Cys-669, and Cys-671/Cys-680. Positions 649–681 (ELQRCLTACHSHGVCNSNHNCHCAPGWAPPFCD) constitute an EGF-like domain. A helical membrane pass occupies residues 702–722 (FLLAMLLSVLLPLLPGAGLAW). The Cytoplasmic segment spans residues 723-813 (CCYRLPGAHL…QVQMPRSCLW (91 aa)). Positions 746–813 (SGPKDGPHRD…QVQMPRSCLW (68 aa)) are disordered. Over residues 780-791 (ENSHEPSSHPEK) the composition is skewed to basic and acidic residues.

The cofactor is Zn(2+). The precursor is cleaved by a furin endopeptidase. Expressed in all tissues, except liver, with high expression in placenta, lung, spleen and veins.

Its subcellular location is the membrane. This Homo sapiens (Human) protein is Disintegrin and metalloproteinase domain-containing protein 33 (ADAM33).